A 260-amino-acid chain; its full sequence is Adenosylcobinamide-GDP ribazoletransferase (260 aa).

Helical transmembrane passes span 42 to 62 (PLAG…ANAI), 64 to 84 (LPPL…TGAL), 117 to 137 (FAAL…MAII), 144 to 164 (YALL…LAFW), 192 to 212 (GLGL…VALI), 214 to 234 (ALVL…AKIG), and 240 to 260 (TLGA…VMAL).

This sequence belongs to the CobS family. Mg(2+) is required as a cofactor.

The protein resides in the cell inner membrane. It catalyses the reaction alpha-ribazole + adenosylcob(III)inamide-GDP = adenosylcob(III)alamin + GMP + H(+). The enzyme catalyses alpha-ribazole 5'-phosphate + adenosylcob(III)inamide-GDP = adenosylcob(III)alamin 5'-phosphate + GMP + H(+). Its pathway is cofactor biosynthesis; adenosylcobalamin biosynthesis; adenosylcobalamin from cob(II)yrinate a,c-diamide: step 7/7. Functionally, joins adenosylcobinamide-GDP and alpha-ribazole to generate adenosylcobalamin (Ado-cobalamin). Also synthesizes adenosylcobalamin 5'-phosphate from adenosylcobinamide-GDP and alpha-ribazole 5'-phosphate. The sequence is that of Adenosylcobinamide-GDP ribazoletransferase from Brucella ovis (strain ATCC 25840 / 63/290 / NCTC 10512).